The chain runs to 504 residues: Pre-mRNA-processing factor 19 (504 aa).

Residue S2 is modified to N-acetylserine. Residues 2 to 73 (SLICSISNEV…KPPSATSIPA (72 aa)) form the U-box domain. The tract at residues 68 to 223 (ATSIPAILKA…VGLHSASIPG (156 aa)) is may mediate interaction with PSMC5. Residues K122, K179, K244, and K261 each carry the N6-acetyllysine modification. A WD 1 repeat occupies 219 to 259 (ASIPGILALDLCPSDTNKILTGGADKNVVVFDKSSEQILAT). WD repeat units lie at residues 262-301 (GHTKKVTSVVFHPSQELVFSASPDATIRIWSVPNASCVQV), 304-345 (AHES…TKVT), 348-387 (TSGCSLTCAQFHPDGLIFGTGTMDSQIKIWDLKERTNVAN), 390-429 (GHSGPITSIAFSENGYYLATAADDSSVKLWDLRKLKNFKT), 433-472 (DNNFEVKSLIFDQSGTYLALGGTDVQIYICKQWTEILHFT), and 473-503 (EHSGLTTGVAFGHHAKFIASTGMDRSLKFYS).

The protein belongs to the WD repeat PRP19 family. Homotetramer. Component of activated, catalytic and post-catalytic spliceosomes. Component of the Prp19 complex/PRP19C/Nineteen complex/NTC and related complexes described as PRP19-CDC5L splicing complex and PSO4 complex. A homotetramer of PRPF19, CDC5L, PLRG1 and BCAS2 constitute the core of those complexes. The interaction with CDC5L, PLRG1 and BCAS2 is direct within this core complex. At least three less stably associated proteins CTNNBL1, CWC15 and HSPA8 are found in the Prp19 complex. The Prp19 complex associates with the spliceosome during its assembly and remodeling recruiting additional proteins. Component of the XAB2 complex, a multimeric protein complex composed of XAB2, PRPF19, AQR, ZNF830, ISY1, and PPIE. Interacts with CWC22 and EIF4A3 in an RNA-independent manner. Interacts with RPA1 and RPA2; the PRP19-CDC5L complex is recruited to the sites of DNA repair where it interacts with the replication protein A complex (RPA). Interacts with SETMAR; required for SETMAR recruitment to site of DNA damage. Interacts with U2AF2; the interaction is direct and recruits the Prp19 complex to RNA polymerase II C-terminal domain (CTD) and the pre-mRNA. Interacts with PRPF3. Interacts with APEX1, DNTT and PSMB4. Interacts with PSMC5. Interacts with KNSTRN. Interacts (via N-terminus) with CDC5L. Interacts with KHDC4. Interacts with USB1. Interacts with DDX41.

The protein localises to the nucleus. It is found in the nucleoplasm. Its subcellular location is the cytoplasm. The protein resides in the cytoskeleton. It localises to the spindle. The protein localises to the lipid droplet. It carries out the reaction S-ubiquitinyl-[E2 ubiquitin-conjugating enzyme]-L-cysteine + [acceptor protein]-L-lysine = [E2 ubiquitin-conjugating enzyme]-L-cysteine + N(6)-ubiquitinyl-[acceptor protein]-L-lysine.. It participates in protein modification; protein ubiquitination. Ubiquitin-protein ligase which is a core component of several complexes mainly involved pre-mRNA splicing and DNA repair. Required for pre-mRNA splicing as component of the spliceosome. Core component of the PRP19C/Prp19 complex/NTC/Nineteen complex which is part of the spliceosome and participates in its assembly, its remodeling and is required for its activity. During assembly of the spliceosome, mediates 'Lys-63'-linked polyubiquitination of the U4 spliceosomal protein PRPF3. Ubiquitination of PRPF3 allows its recognition by the U5 component PRPF8 and stabilizes the U4/U5/U6 tri-snRNP spliceosomal complex. Recruited to RNA polymerase II C-terminal domain (CTD) and the pre-mRNA, it may also couple the transcriptional and spliceosomal machineries. The XAB2 complex, which contains PRPF19, is also involved in pre-mRNA splicing, transcription and transcription-coupled repair. Beside its role in pre-mRNA splicing PRPF19, as part of the PRP19-CDC5L complex, plays a role in the DNA damage response/DDR. It is recruited to the sites of DNA damage by the RPA complex where PRPF19 directly ubiquitinates RPA1 and RPA2. 'Lys-63'-linked polyubiquitination of the RPA complex allows the recruitment of the ATR-ATRIP complex and the activation of ATR, a master regulator of the DNA damage response. May also play a role in DNA double-strand break (DSB) repair by recruiting the repair factor SETMAR to altered DNA. As part of the PSO4 complex may also be involved in the DNA interstrand cross-links/ICLs repair process. In addition, may also mediate 'Lys-48'-linked polyubiquitination of substrates and play a role in proteasomal degradation. May play a role in the biogenesis of lipid droplets. May play a role in neural differentiation possibly through its function as part of the spliceosome. The protein is Pre-mRNA-processing factor 19 (PRPF19) of Bos taurus (Bovine).